A 499-amino-acid chain; its full sequence is Bifunctional purine biosynthesis protein PurH (499 aa).

In terms of domain architecture, MGS-like spans 1 to 144 (MIKRALISVF…KNFKDVVVLT (144 aa)).

It belongs to the PurH family.

It carries out the reaction (6R)-10-formyltetrahydrofolate + 5-amino-1-(5-phospho-beta-D-ribosyl)imidazole-4-carboxamide = 5-formamido-1-(5-phospho-D-ribosyl)imidazole-4-carboxamide + (6S)-5,6,7,8-tetrahydrofolate. The catalysed reaction is IMP + H2O = 5-formamido-1-(5-phospho-D-ribosyl)imidazole-4-carboxamide. It functions in the pathway purine metabolism; IMP biosynthesis via de novo pathway; 5-formamido-1-(5-phospho-D-ribosyl)imidazole-4-carboxamide from 5-amino-1-(5-phospho-D-ribosyl)imidazole-4-carboxamide (10-formyl THF route): step 1/1. Its pathway is purine metabolism; IMP biosynthesis via de novo pathway; IMP from 5-formamido-1-(5-phospho-D-ribosyl)imidazole-4-carboxamide: step 1/1. The sequence is that of Bifunctional purine biosynthesis protein PurH from Clostridium botulinum (strain Langeland / NCTC 10281 / Type F).